The following is a 135-amino-acid chain: Large ribosomal subunit protein mL54 (135 aa).

The transit peptide at 1 to 14 (MAAAHLLRASRVWA) directs the protein to the mitochondrion.

The protein belongs to the mitochondrion-specific ribosomal protein mL54 family. In terms of assembly, component of the mitochondrial ribosome large subunit (39S) which comprises a 16S rRNA and about 50 distinct proteins.

The protein resides in the mitochondrion. The polypeptide is Large ribosomal subunit protein mL54 (Mrpl54) (Mus musculus (Mouse)).